Reading from the N-terminus, the 265-residue chain is Ribosomal RNA small subunit methyltransferase A (265 aa).

Residues His-11, Leu-13, Gly-38, Glu-59, Asp-83, and Asn-100 each coordinate S-adenosyl-L-methionine.

It belongs to the class I-like SAM-binding methyltransferase superfamily. rRNA adenine N(6)-methyltransferase family. RsmA subfamily.

The protein resides in the cytoplasm. The enzyme catalyses adenosine(1518)/adenosine(1519) in 16S rRNA + 4 S-adenosyl-L-methionine = N(6)-dimethyladenosine(1518)/N(6)-dimethyladenosine(1519) in 16S rRNA + 4 S-adenosyl-L-homocysteine + 4 H(+). Functionally, specifically dimethylates two adjacent adenosines (A1518 and A1519) in the loop of a conserved hairpin near the 3'-end of 16S rRNA in the 30S particle. May play a critical role in biogenesis of 30S subunits. This chain is Ribosomal RNA small subunit methyltransferase A, found in Thermosynechococcus vestitus (strain NIES-2133 / IAM M-273 / BP-1).